A 354-amino-acid chain; its full sequence is Protein Wnt-8a (354 aa).

The first 19 residues, 1-19 (MGHLLMLWVAAGMCYPALG), serve as a signal peptide directing secretion. The cysteines at positions 54 and 65 are disulfide-linked. A glycan (N-linked (GlcNAc...) asparagine) is linked at asparagine 103. Disulfide bonds link cysteine 104-cysteine 112, cysteine 114-cysteine 132, cysteine 180-cysteine 194, cysteine 182-cysteine 189, cysteine 259-cysteine 297, cysteine 275-cysteine 290, cysteine 294-cysteine 336, cysteine 312-cysteine 327, cysteine 314-cysteine 324, and cysteine 319-cysteine 320. The O-palmitoleoyl serine moiety is linked to residue serine 186. Asparagine 262 carries an N-linked (GlcNAc...) asparagine glycan.

This sequence belongs to the Wnt family. As to quaternary structure, forms a soluble 1:1 complex with AFM; this prevents oligomerization and is required for prolonged biological activity. The complex with AFM may represent the physiological form in body fluids. Palmitoleoylation is required for efficient binding to frizzled receptors. Depalmitoleoylation leads to Wnt signaling pathway inhibition. In terms of processing, proteolytic processing by TIKI1 and TIKI2 promotes oxidation and formation of large disulfide-bond oligomers, leading to inactivation of WNT8A.

Its subcellular location is the secreted. The protein localises to the extracellular space. The protein resides in the extracellular matrix. Its function is as follows. Ligand for members of the frizzled family of seven transmembrane receptors. Plays a role in embryonic patterning. This chain is Protein Wnt-8a (Wnt8a), found in Mus musculus (Mouse).